We begin with the raw amino-acid sequence, 115 residues long: Basic leucine zipper transcriptional factor ATF-like (115 aa).

Residues Met-1–Ile-57 form a disordered region. The 64-residue stretch at Asp-27–His-90 folds into the bZIP domain. The basic motif stretch occupies residues Lys-29–Lys-51. The leucine-zipper stretch occupies residues Leu-55–Leu-83.

It belongs to the bZIP family.

The protein localises to the nucleus. It localises to the cytoplasm. Functionally, AP-1 family transcription factor that controls the differentiation of lineage-specific cells in the immune system: specifically mediates the differentiation of T-helper 17 cells (Th17), follicular T-helper cells (TfH), CD8(+) dendritic cells and class-switch recombination (CSR) in B-cells. The polypeptide is Basic leucine zipper transcriptional factor ATF-like (batf) (Xenopus tropicalis (Western clawed frog)).